Consider the following 1485-residue polypeptide: MSLRSNKLLVAAVIFTVVTFGLLLTSSIFNNKTTTSLTYGGILPKFGQRIIEKKSNEEYIIEKIEHTQKDGEDVRSTRYLTHHSYLLRNLAKMEVKHHGKDFSINDICYKPHNAIFETTFAPENIDKLPNYLQRLILEAQRLSPCLIVTPLNCYHDSYRIHSEMSKWNTSNVTNFLNRKLRNSYIDAIGESEERPYIKSTYGPDLIKEWAHLMFKLPSKQTSSFSKKDLSSKIELWLSSIESKTNLTELGRPSEVDNYFDICTSMQQVHDFDERKRKFGLYDDDDEFLIGLDCVENKTKFIEWIQERELRGVSKPFNPNQQCDGIFKNSEGLEFFYGTRSFGNNTAPFDKMKTEIGLMTPEQILTTMLHSDFVNGFESIWTIERAQELLDDFRLAIRQEVKRFNENRSSLKIGIDTRVVQREESNETELEISSNLDSVVYFILFIRCVLLIFFAFFAWSVNPLRSAVMFLVRDALTSLLFSILCKSDGQIELNSELLGYIILLTIVNTYLTTRVSWYKDRNETCIQRAKDFPSRSNFSLLFSIDSLRENCDSRQLQYALAKLSKYLTALDTYSTETFMQLPNYWPFISILFVPITGCYWYFVDINLPKISVVLLPSFIVATIEQRQVEKSLLKERKAKKEFQKVQKKKMEKFLSDGAVDRLLSGNSESVEDKKLYKSKDCVIHKESAGRLYELSRSSYDVSKIMAYPNQRVRDFRFDALGCYFWLMKLKSAGILLYGSAVLFVLLSVAVMLIPIQRTSLQKDMNNEVYFGFSINNMSSDWANINKNLHAFNSEIDSIQSLQTISNWKKGFDRFEGRFYKNSSRISDANDYVEWMNQEPINWSVMAPLTRISPKFGIPSPFKFRFRYQIEVNNNESEVIDTVQRIDTLLTKYKGTLSSPIVDGVLYEYYHGNAAVWNSFVFNELLASGILSAFFALIVVIFSITPSISSVLIFSFFVIGSRLEIAAVISLFSLDNQQLYTDSAVLVGFLVAWAPFYELSLFRRRLLYKLKTRCTPELSSGKRIRPPFTKAVDTAQVFAIVLAASLIIAVVAGVVPEFQKFFWPTVILIVVQLVAFGNSIAVLVATNQMFEREVRNFLDNEFELGNGTTAGQVCHMAQKLIPPKYDIPIPMNDFHIRPTNMSKFYAPPPAKKRAKQTNNETDPEKKEDEPGTSNANNVSQEEAAHRLAILPWHFVLGGIPVDLTTRSDQIINGPFIGISSDAMRTHEINSELEDQDDYSSESSVEDVESDPAPEEEIKYHEENMLHMIEKVQKDAAEKEAKEKVHQVESAQRRAPNFDDPNVAGPSHRYQRNEERISTDIVPADPPREIPANPVPPPTHVLVQRAPRPHEMPPVIDRTIPRDPRTEPPNLQECIQQNDDPSLPPHPRRHQYPDHYGRAMISYCEDVYWTYNDGRLPPNVAMPPRPFDWHYRRVAPPEDFNYVPPPGQPSIPIPAEAMALREERARAHREQEQRDNSQSPSPSPEPGL.

Residues 1–28 (MSLRSNKLLVAAVIFTVVTFGLLLTSSI) form the signal peptide. Helical transmembrane passes span 438–458 (VVYFILFIRCVLLIFFAFFAW), 490–510 (IELNSELLGYIILLTIVNTYL), 584–604 (WPFISILFVPITGCYWYFVDI), 732–752 (GILLYGSAVLFVLLSVAVMLI), 923–943 (LLASGILSAFFALIVVIFSIT), 950–970 (LIFSFFVIGSRLEIAAVISLF), 980–1000 (DSAVLVGFLVAWAPFYELSLF), 1033–1053 (AQVFAIVLAASLIIAVVAGVV), and 1063–1083 (TVILIVVQLVAFGNSIAVLVA). The interval 1131-1271 (DFHIRPTNMS…MLHMIEKVQK (141 aa)) is interaction with fem-3. The segment at 1143–1175 (YAPPPAKKRAKQTNNETDPEKKEDEPGTSNANN) is disordered. The chain crosses the membrane as a helical span at residues 1181–1201 (AAHRLAILPWHFVLGGIPVDL). Disordered stretches follow at residues 1228-1252 (SELEDQDDYSSESSVEDVESDPAPE), 1275-1306 (EKEAKEKVHQVESAQRRAPNFDDPNVAGPSHR), and 1348-1384 (EMPPVIDRTIPRDPRTEPPNLQECIQQNDDPSLPPHP). The span at 1275–1284 (EKEAKEKVHQ) shows a compositional bias: basic and acidic residues. Residues 1401–1422 (CEDVYWTYNDGRLPPNVAMPPR) are MX regulatory domain; required for tra-1 binding. Positions 1442 to 1485 (PPGQPSIPIPAEAMALREERARAHREQEQRDNSQSPSPSPEPGL) are disordered. Residues 1456-1472 (ALREERARAHREQEQRD) are compositionally biased toward basic and acidic residues.

Interacts with tra-1 and fem-3. Somatic and germline tissues.

The protein localises to the membrane. Its function is as follows. Plays a major role in controlling sexual cell fates. Promotes female development in XX animals where it sequesters one or more of the FEM proteins to the membrane thereby freeing the tra-1 protein (a putative transcription factor) to enter the nucleus and promote female development. In XO animals it acts as a receptor for her-1 which prevents it from binding to FEM proteins thereby repressing the activity of tra-1. Negatively regulates male development when bound to fem-3 and is required together with tra-1 for promoting spermatogenesis. This chain is Sex-determining transformer protein 2, found in Caenorhabditis remanei (Caenorhabditis vulgaris).